Reading from the N-terminus, the 457-residue chain is Bifunctional F420 biosynthesis protein FbiB (457 aa).

A coenzyme F420:L-glutamate ligase region spans residues 1-253 (MTSSDSHRSA…NGPDDLFWLG (253 aa)). GTP contacts are provided by residues 29–32 (LPEF), Ser59, and Lys64. Asp118 is an a divalent metal cation binding site. Asn121 is a binding site for GTP. 2 residues coordinate a divalent metal cation: Asp159 and Thr160. Residues 254 to 457 (TTEALELGRQ…VRVADLLLRK (204 aa)) are dehydro-coenzyme F420-0 reductase. FMN contacts are provided by residues 269-273 (RRSVR) and Ala297. Asp329 contacts coenzyme F420-(gamma-Glu)n. Residues Gly408 and Arg445 each coordinate FMN.

It in the N-terminal section; belongs to the CofE family. Mg(2+) is required as a cofactor. It depends on Mn(2+) as a cofactor. K(+) serves as cofactor.

The catalysed reaction is oxidized coenzyme F420-0 + GTP + L-glutamate = oxidized coenzyme F420-1 + GDP + phosphate + H(+). It catalyses the reaction oxidized coenzyme F420-1 + GTP + L-glutamate = oxidized coenzyme F420-2 + GDP + phosphate + H(+). The enzyme catalyses oxidized coenzyme F420-(gamma-L-Glu)(n) + GTP + L-glutamate = oxidized coenzyme F420-(gamma-L-Glu)(n+1) + GDP + phosphate + H(+). It carries out the reaction oxidized coenzyme F420-0 + FMN + H(+) = dehydro coenzyme F420-0 + FMNH2. It functions in the pathway cofactor biosynthesis; coenzyme F420 biosynthesis. Functionally, bifunctional enzyme that catalyzes the GTP-dependent successive addition of multiple gamma-linked L-glutamates to the L-lactyl phosphodiester of 7,8-didemethyl-8-hydroxy-5-deazariboflavin (F420-0) to form polyglutamated F420 derivatives, and the FMNH2-dependent reduction of dehydro-F420-0 to form F420-0. The sequence is that of Bifunctional F420 biosynthesis protein FbiB from Mycobacterium leprae (strain TN).